The sequence spans 196 residues: Peptidyl-tRNA hydrolase (196 aa).

Tyr-21 contacts tRNA. Catalysis depends on His-26, which acts as the Proton acceptor. Residues Phe-72, Asn-74, and Asn-120 each coordinate tRNA.

It belongs to the PTH family. As to quaternary structure, monomer.

Its subcellular location is the cytoplasm. The enzyme catalyses an N-acyl-L-alpha-aminoacyl-tRNA + H2O = an N-acyl-L-amino acid + a tRNA + H(+). Hydrolyzes ribosome-free peptidyl-tRNAs (with 1 or more amino acids incorporated), which drop off the ribosome during protein synthesis, or as a result of ribosome stalling. Functionally, catalyzes the release of premature peptidyl moieties from peptidyl-tRNA molecules trapped in stalled 50S ribosomal subunits, and thus maintains levels of free tRNAs and 50S ribosomes. The polypeptide is Peptidyl-tRNA hydrolase (Mycobacteroides abscessus (strain ATCC 19977 / DSM 44196 / CCUG 20993 / CIP 104536 / JCM 13569 / NCTC 13031 / TMC 1543 / L948) (Mycobacterium abscessus)).